The sequence spans 130 residues: Large ribosomal subunit protein eL32 (130 aa).

This sequence belongs to the eukaryotic ribosomal protein eL32 family.

The chain is Large ribosomal subunit protein eL32 (rpl32e) from Pyrococcus horikoshii (strain ATCC 700860 / DSM 12428 / JCM 9974 / NBRC 100139 / OT-3).